The sequence spans 962 residues: Exportin-T (962 aa).

Met-1 bears the N-acetylmethionine mark. Lys-634 carries the N6-acetyllysine modification.

Found in a complex with XPOT, Ran and tRNA. Probably found in a complex with nucleoporins. Interacts with Ran and tRNA in a GTP-dependent manner.

The protein resides in the nucleus. It is found in the cytoplasm. Functionally, mediates the nuclear export of aminoacylated tRNAs. In the nucleus binds to tRNA and to the GTPase Ran in its active GTP-bound form. Docking of this trimeric complex to the nuclear pore complex (NPC) is mediated through binding to nucleoporins. Upon transit of a nuclear export complex into the cytoplasm, disassembling of the complex and hydrolysis of Ran-GTP to Ran-GDP (induced by RANBP1 and RANGAP1, respectively) cause release of the tRNA from the export receptor. XPOT then return to the nuclear compartment and mediate another round of transport. The directionality of nuclear export is thought to be conferred by an asymmetric distribution of the GTP- and GDP-bound forms of Ran between the cytoplasm and nucleus. The protein is Exportin-T (XPOT) of Pongo abelii (Sumatran orangutan).